Here is a 1590-residue protein sequence, read N- to C-terminus: Pentafunctional AROM polypeptide (1590 aa).

Residues 1–400 (MSTANGSSPT…HEPKASSVDD (400 aa)) are 3-dehydroquinate synthase. NAD(+) contacts are provided by residues 49–51 (DTN), 96–99 (EGSK), 127–129 (GGV), and Asp132. Position 143 (Arg143) interacts with 7-phospho-2-dehydro-3-deoxy-D-arabino-heptonate. An NAD(+)-binding site is contributed by 152-153 (TT). 2 residues coordinate 7-phospho-2-dehydro-3-deoxy-D-arabino-heptonate: Asp159 and Lys165. Position 174 (Lys174) interacts with NAD(+). A 7-phospho-2-dehydro-3-deoxy-D-arabino-heptonate-binding site is contributed by Asn175. NAD(+)-binding positions include 192–195 (FLNT) and Asn203. Zn(2+) is bound at residue Glu207. 7-phospho-2-dehydro-3-deoxy-D-arabino-heptonate-binding positions include 207-210 (EVIK) and Lys266. Glu276 functions as the Proton acceptor; for 3-dehydroquinate synthase activity in the catalytic mechanism. Residues 280-284 (RNLLN) and His287 contribute to the 7-phospho-2-dehydro-3-deoxy-D-arabino-heptonate site. His287 is a binding site for Zn(2+). His291 acts as the Proton acceptor; for 3-dehydroquinate synthase activity in catalysis. His303 and Lys372 together coordinate 7-phospho-2-dehydro-3-deoxy-D-arabino-heptonate. His303 serves as a coordination point for Zn(2+). Positions 413 to 856 (VQPGVRPGLK…WDVLSGVFGV (444 aa)) are EPSP synthase. The For EPSP synthase activity role is filled by Cys838. The interval 876-1070 (NRSVFVIGMR…KAKPHSFFVS (195 aa)) is shikimate kinase. 883 to 890 (GMRGAGKS) lines the ATP pocket. The segment at 1071–1285 (LTVPNITAHT…AAPGQLTAAE (215 aa)) is 3-dehydroquinase. His1187 serves as the catalytic Proton acceptor; for 3-dehydroquinate dehydratase activity. Lys1215 serves as the catalytic Schiff-base intermediate with substrate; for 3-dehydroquinate dehydratase activity. Residues 1298–1590 (KRKFYLFGKP…IVMNGTSDSS (293 aa)) are shikimate dehydrogenase.

In the N-terminal section; belongs to the sugar phosphate cyclases superfamily. Dehydroquinate synthase family. The protein in the 2nd section; belongs to the EPSP synthase family. It in the 3rd section; belongs to the shikimate kinase family. This sequence in the 4th section; belongs to the type-I 3-dehydroquinase family. In the C-terminal section; belongs to the shikimate dehydrogenase family. As to quaternary structure, homodimer. The cofactor is Zn(2+).

Its subcellular location is the cytoplasm. It catalyses the reaction 7-phospho-2-dehydro-3-deoxy-D-arabino-heptonate = 3-dehydroquinate + phosphate. The catalysed reaction is 3-dehydroquinate = 3-dehydroshikimate + H2O. It carries out the reaction shikimate + NADP(+) = 3-dehydroshikimate + NADPH + H(+). The enzyme catalyses shikimate + ATP = 3-phosphoshikimate + ADP + H(+). It catalyses the reaction 3-phosphoshikimate + phosphoenolpyruvate = 5-O-(1-carboxyvinyl)-3-phosphoshikimate + phosphate. Its pathway is metabolic intermediate biosynthesis; chorismate biosynthesis; chorismate from D-erythrose 4-phosphate and phosphoenolpyruvate: step 2/7. It participates in metabolic intermediate biosynthesis; chorismate biosynthesis; chorismate from D-erythrose 4-phosphate and phosphoenolpyruvate: step 3/7. The protein operates within metabolic intermediate biosynthesis; chorismate biosynthesis; chorismate from D-erythrose 4-phosphate and phosphoenolpyruvate: step 4/7. It functions in the pathway metabolic intermediate biosynthesis; chorismate biosynthesis; chorismate from D-erythrose 4-phosphate and phosphoenolpyruvate: step 5/7. Its pathway is metabolic intermediate biosynthesis; chorismate biosynthesis; chorismate from D-erythrose 4-phosphate and phosphoenolpyruvate: step 6/7. Its function is as follows. The AROM polypeptide catalyzes 5 consecutive enzymatic reactions in prechorismate polyaromatic amino acid biosynthesis. This Pyricularia oryzae (strain 70-15 / ATCC MYA-4617 / FGSC 8958) (Rice blast fungus) protein is Pentafunctional AROM polypeptide.